Here is a 588-residue protein sequence, read N- to C-terminus: Cyclomaltodextrinase (588 aa).

Substrate contacts are provided by His247 and Arg326. Catalysis depends on Asp328, which acts as the Nucleophile. Residue Glu357 is the Proton donor of the active site. Substrate-binding positions include 423–424 (HD), Asp468, and Arg472.

Belongs to the glycosyl hydrolase 13 family. In terms of assembly, exists as a monomer or a homodimer in solution. Homodimer is more active and stable than the monomer.

It carries out the reaction cyclomaltodextrin + H2O = linear maltodextrin. Its activity is regulated as follows. No metal dependence, but Mn(2+) increases the activity with alpha-cyclodextrin as substrate. No effect on the activity with presence or absence of Ca(2+), Zn(2+), Tween-20 or EDTA. Functionally, hydrolyzes alpha-, beta- and gamma-cyclodextrins with the highest activity with alpha-cyclodextrin (cyclomaltohexaose). Pullulan is the preferred substrate from linear substrates. Maltose is a major product of these reactions. Is also able to hydrolyze maltotriose and acarbose, and transglycosylate their hydrolytic products. Major reaction products of maltotriose and of acarbose are maltose and glucose, and glucose and pseudotrisaccharide, respectively. No activity with glucose or maltose as substrate. In Geobacillus thermopakistaniensis (strain MAS1), this protein is Cyclomaltodextrinase.